A 659-amino-acid chain; its full sequence is Acetyl-coenzyme A synthetase (659 aa).

The tract at residues 1–35 (MATEQTKGQSSESISSVLSERRKFPPPEAFSSQSH) is disordered. Residues 205-208 (RRGS), Thr323, and Asn347 contribute to the CoA site. ATP is bound by residues 399 to 401 (GEP), 423 to 428 (DTWWQT), Asp512, and Arg527. Residue Ser535 coordinates CoA. Arg538 is a binding site for ATP. The Mg(2+) site is built by Val549, His551, and Val554. Lys621 is subject to N6-acetyllysine.

This sequence belongs to the ATP-dependent AMP-binding enzyme family. It depends on Mg(2+) as a cofactor. Acetylated. Deacetylation by the SIR2-homolog deacetylase activates the enzyme.

It catalyses the reaction acetate + ATP + CoA = acetyl-CoA + AMP + diphosphate. Functionally, catalyzes the conversion of acetate into acetyl-CoA (AcCoA), an essential intermediate at the junction of anabolic and catabolic pathways. AcsA undergoes a two-step reaction. In the first half reaction, AcsA combines acetate with ATP to form acetyl-adenylate (AcAMP) intermediate. In the second half reaction, it can then transfer the acetyl group from AcAMP to the sulfhydryl group of CoA, forming the product AcCoA. The chain is Acetyl-coenzyme A synthetase from Chlorobaculum tepidum (strain ATCC 49652 / DSM 12025 / NBRC 103806 / TLS) (Chlorobium tepidum).